The primary structure comprises 1292 residues: Sorbin and SH3 domain-containing protein 1 (1292 aa).

Disordered regions lie at residues Met1–Asp29, Leu73–Glu158, His214–Leu275, and Arg318–Val381. Low complexity predominate over residues Arg74–Ser89. A Phosphothreonine modification is found at Thr82. Phosphoserine is present on residues Ser86 and Ser89. Basic and acidic residues predominate over residues Thr93–Leu102. Phosphoserine is present on residues Glu105, Leu114, Val137, Ser146, Ser242, and Ser259. The segment covering Leu114–Ser128 has biased composition (polar residues). A compositionally biased stretch (pro residues) spans Ser240–Pro252. The span at Ala266–Leu275 shows a compositional bias: polar residues. Phosphoserine is present on Ser341. At Thr344 the chain carries Phosphothreonine. A phosphoserine mark is found at Glu346 and Ser350. Basic and acidic residues predominate over residues Ala354 to Arg365. Residues Val366 to Asp469 enclose the SoHo domain. Residues Ser369, Ser374, and Asn387 each carry the phosphoserine modification. Residues Leu405–Ser534 are disordered. Residues Tyr437–Pro450 are compositionally biased toward polar residues. 6 positions are modified to phosphoserine: Ser452, Ser465, Asp469, Ser472, Arg478, and Ser481. The span at Ser510–Ser534 shows a compositional bias: basic and acidic residues. Tyr536 is modified (phosphotyrosine; by ABL1). Residues Ser556, Asn603, Ser609, and Ser640 each carry the phosphoserine modification. The interval Ala628–Pro650 is disordered. Tyr654 is subject to Phosphotyrosine; by ABL1. 2 positions are modified to phosphoserine: Ser665 and Lys700. Residues Pro692–His716 are disordered. Thr708 carries the post-translational modification Phosphothreonine. Phosphoserine occurs at positions 713, 730, 735, and 765. The 60-residue stretch at Ser793 to Pro852 folds into the SH3 1 domain. Thr862 is modified (phosphothreonine). Residues Leu867–Arg928 enclose the SH3 2 domain. Val923 is subject to Phosphoserine. Tyr937 bears the Phosphotyrosine mark. Residues Ser944–Pro954 show a composition bias toward low complexity. Disordered regions lie at residues Ser944–Ala976, Ser1041–Leu1064, Gln1106–Cys1150, and Thr1162–Ser1230. Ser945 and Ser953 each carry phosphoserine. Residues Gln955–Pro971 show a composition bias toward polar residues. Positions Gln1106–Arg1117 are enriched in polar residues. Residues Pro1119–Gly1136 show a composition bias toward basic and acidic residues. Over residues Thr1162–Pro1172 the composition is skewed to polar residues. Positions Gln1192–Gly1203 are enriched in basic and acidic residues. Residues Gly1211–Ser1230 show a composition bias toward polar residues. Gln1213 carries the post-translational modification Phosphoserine. The 62-residue stretch at Gln1231–Leu1292 folds into the SH3 3 domain. The residue at position 1240 (Tyr1240) is a Phosphotyrosine; by ABL1.

In terms of assembly, interacts (via third SH3 domain) with the Ten-1 ICD form of TENM1; the interaction induces the translocation of SORBS1 to the nucleus. Interacts with INSM1. Interacts with the long isoform of AFDN and with VCL. AFDN and VCL bind to SORBS1 in a competitive manner and do not form a ternary complex. Interacts with ABL1, CBL, CBLB and INPPL1/SHIP2 through the third SH3 domain. Interaction with ABL1 occurs only after insulin stimulation while this has no effect on the interaction with INPPL1. Interacts with the insulin receptor but dissociates from it following insulin stimulation. Also interacts with SCA7, PTK2/FAK1 and flotillin. Interacts (via SH3 domain 2) with PXN. O-glycosylated. As to expression, detected in skeletal muscle (at protein level). Widely expressed with highest levels in heart and skeletal muscle.

The protein localises to the cell junction. Its subcellular location is the adherens junction. The protein resides in the cell membrane. It localises to the cytoplasm. It is found in the cytoskeleton. The protein localises to the focal adhesion. Its subcellular location is the nucleus. The protein resides in the nucleus matrix. Functionally, plays a role in tyrosine phosphorylation of CBL by linking CBL to the insulin receptor. Required for insulin-stimulated glucose transport. Involved in formation of actin stress fibers and focal adhesions. In Homo sapiens (Human), this protein is Sorbin and SH3 domain-containing protein 1.